The sequence spans 380 residues: Erythronate-4-phosphate dehydrogenase (380 aa).

Residues Ser45 and Thr66 each coordinate substrate. A disulfide bridge connects residues Cys65 and Cys90. NAD(+) contacts are provided by residues 126–127, Asp146, Thr175, 206–208, and Asp232; these read QV and ASR. Residue Arg208 is part of the active site. Residue Glu237 is part of the active site. His254 functions as the Proton donor in the catalytic mechanism. Gly257 serves as a coordination point for NAD(+). Residue Tyr258 participates in substrate binding.

It belongs to the D-isomer specific 2-hydroxyacid dehydrogenase family. PdxB subfamily. As to quaternary structure, homodimer.

Its subcellular location is the cytoplasm. The catalysed reaction is 4-phospho-D-erythronate + NAD(+) = (R)-3-hydroxy-2-oxo-4-phosphooxybutanoate + NADH + H(+). Its pathway is cofactor biosynthesis; pyridoxine 5'-phosphate biosynthesis; pyridoxine 5'-phosphate from D-erythrose 4-phosphate: step 2/5. Functionally, catalyzes the oxidation of erythronate-4-phosphate to 3-hydroxy-2-oxo-4-phosphonooxybutanoate. The chain is Erythronate-4-phosphate dehydrogenase from Pseudomonas aeruginosa (strain ATCC 15692 / DSM 22644 / CIP 104116 / JCM 14847 / LMG 12228 / 1C / PRS 101 / PAO1).